The chain runs to 460 residues: Flavin-containing monooxygenase FMO GS-OX-like 9 (460 aa).

20–25 provides a ligand contact to FAD; it reads GAGPAG. Residue 222 to 227 coordinates NADP(+); that stretch reads GNSMSG.

The protein belongs to the FMO family. FAD serves as cofactor.

In terms of biological role, catalyzes the conversion of methylthioalkyl glucosinolates of any chain length into methylsulfinylalkyl glucosinolates. The protein is Flavin-containing monooxygenase FMO GS-OX-like 9 of Arabidopsis thaliana (Mouse-ear cress).